Here is a 73-residue protein sequence, read N- to C-terminus: RNA-binding protein Hfq (73 aa).

A Sm domain is found at 8-68 (DQFLNQIRKD…ISTFAPQKNV (61 aa)).

This sequence belongs to the Hfq family. Homohexamer.

Functionally, RNA chaperone that binds small regulatory RNA (sRNAs) and mRNAs to facilitate mRNA translational regulation in response to envelope stress, environmental stress and changes in metabolite concentrations. Also binds with high specificity to tRNAs. This Bacillus velezensis (strain DSM 23117 / BGSC 10A6 / LMG 26770 / FZB42) (Bacillus amyloliquefaciens subsp. plantarum) protein is RNA-binding protein Hfq.